An 876-amino-acid polypeptide reads, in one-letter code: Monofunctional isopimaradiene synthase, chloroplastic (876 aa).

Residues 1-64 constitute a chloroplast transit peptide; the sequence is MAMPSYSSLS…YLRLGSRKII (64 aa). Mg(2+) contacts are provided by aspartate 628, aspartate 632, asparagine 772, threonine 776, and glutamate 780. Positions 628–632 match the DDXXD motif motif; that stretch reads DDLYD.

This sequence belongs to the terpene synthase family. Tpsd subfamily. The cofactor is Mg(2+).

The protein localises to the plastid. The protein resides in the chloroplast. It carries out the reaction (+)-copalyl diphosphate = isopimara-7,15-diene + diphosphate. It functions in the pathway terpene metabolism; oleoresin biosynthesis. Involved in defensive oleoresin formation in conifers in response to insect attack or other injury. Involved in diterpene (C20) olefins biosynthesis. Monofunctional enzyme lacking the DXDD motif in the class II active site relevant for the cyclization of geranylgeranyl diphosphate (GGPP). Requires (+)-copalyl diphosphate ((+)-CPP) as substrate, but no activity with GGPP or ent-CPP. Isopimaradiene is the major products of the enzyme followed by sandaracopimaradiene. This Pinus banksiana (Jack pine) protein is Monofunctional isopimaradiene synthase, chloroplastic.